We begin with the raw amino-acid sequence, 622 residues long: DNA mismatch repair protein MutL (622 aa).

Belongs to the DNA mismatch repair MutL/HexB family.

Functionally, this protein is involved in the repair of mismatches in DNA. It is required for dam-dependent methyl-directed DNA mismatch repair. May act as a 'molecular matchmaker', a protein that promotes the formation of a stable complex between two or more DNA-binding proteins in an ATP-dependent manner without itself being part of a final effector complex. The sequence is that of DNA mismatch repair protein MutL from Phenylobacterium zucineum (strain HLK1).